Here is a 218-residue protein sequence, read N- to C-terminus: N-(5'-phosphoribosyl)anthranilate isomerase (218 aa).

The protein belongs to the TrpF family.

The catalysed reaction is N-(5-phospho-beta-D-ribosyl)anthranilate = 1-(2-carboxyphenylamino)-1-deoxy-D-ribulose 5-phosphate. Its pathway is amino-acid biosynthesis; L-tryptophan biosynthesis; L-tryptophan from chorismate: step 3/5. This Halobacterium salinarum (strain ATCC 29341 / DSM 671 / R1) protein is N-(5'-phosphoribosyl)anthranilate isomerase.